A 485-amino-acid chain; its full sequence is Glycogen synthase (485 aa).

Lys-21 contacts ADP-alpha-D-glucose.

It belongs to the glycosyltransferase 1 family. Bacterial/plant glycogen synthase subfamily.

The catalysed reaction is [(1-&gt;4)-alpha-D-glucosyl](n) + ADP-alpha-D-glucose = [(1-&gt;4)-alpha-D-glucosyl](n+1) + ADP + H(+). It participates in glycan biosynthesis; glycogen biosynthesis. Its function is as follows. Synthesizes alpha-1,4-glucan chains using ADP-glucose. In Pseudomonas savastanoi pv. phaseolicola (strain 1448A / Race 6) (Pseudomonas syringae pv. phaseolicola (strain 1448A / Race 6)), this protein is Glycogen synthase.